The sequence spans 360 residues: DNA replication and repair protein RecF (360 aa).

30-37 contributes to the ATP binding site; that stretch reads GQNGSGKT.

The protein belongs to the RecF family.

The protein resides in the cytoplasm. The RecF protein is involved in DNA metabolism; it is required for DNA replication and normal SOS inducibility. RecF binds preferentially to single-stranded, linear DNA. It also seems to bind ATP. This is DNA replication and repair protein RecF from Shewanella baltica (strain OS223).